The following is an 832-amino-acid chain: Protein P (832 aa).

The segment at 1 to 177 (MPLSYQHFRR…FCGSPYSWEQ (177 aa)) is terminal protein domain (TP). Positions 178-335 (ELQHGAESFH…YCLSHIVNLL (158 aa)) are spacer. Residues 241–263 (RRPFGVEPSGSGHTTNLASKSAS) are disordered. Residues 251-263 (SGHTTNLASKSAS) are compositionally biased toward polar residues. The tract at residues 336 to 679 (EDWGPCAEHG…YLNLYPVARQ (344 aa)) is polymerase/reverse transcriptase domain (RT). The Reverse transcriptase domain occupies 346-589 (EHHIRIPRTP…YSLHFMGYVI (244 aa)). Residues D418, D540, and D541 each coordinate Mg(2+).

The protein belongs to the hepadnaviridae P protein family.

It catalyses the reaction DNA(n) + a 2'-deoxyribonucleoside 5'-triphosphate = DNA(n+1) + diphosphate. The enzyme catalyses Endonucleolytic cleavage to 5'-phosphomonoester.. With respect to regulation, activated by host HSP70 and HSP40 in vitro to be able to bind the epsilon loop of the pgRNA. Because deletion of the RNase H region renders the protein partly chaperone-independent, the chaperones may be needed indirectly to relieve occlusion of the RNA-binding site by this domain. Inhibited by several reverse-transcriptase inhibitors: Lamivudine, Adefovir and Entecavir. In terms of biological role, multifunctional enzyme that converts the viral RNA genome into dsDNA in viral cytoplasmic capsids. This enzyme displays a DNA polymerase activity that can copy either DNA or RNA templates, and a ribonuclease H (RNase H) activity that cleaves the RNA strand of RNA-DNA heteroduplexes in a partially processive 3'- to 5'-endonucleasic mode. Neo-synthesized pregenomic RNA (pgRNA) are encapsidated together with the P protein, and reverse-transcribed inside the nucleocapsid. Initiation of reverse-transcription occurs first by binding the epsilon loop on the pgRNA genome, and is initiated by protein priming, thereby the 5'-end of (-)DNA is covalently linked to P protein. Partial (+)DNA is synthesized from the (-)DNA template and generates the relaxed circular DNA (RC-DNA) genome. After budding and infection, the RC-DNA migrates in the nucleus, and is converted into a plasmid-like covalently closed circular DNA (cccDNA). The activity of P protein does not seem to be necessary for cccDNA generation, and is presumably released from (+)DNA by host nuclear DNA repair machinery. This chain is Protein P, found in Homo sapiens (Human).